A 215-amino-acid chain; its full sequence is 3-isopropylmalate dehydratase small subunit (215 aa).

The protein belongs to the LeuD family. LeuD type 1 subfamily. In terms of assembly, heterodimer of LeuC and LeuD.

The catalysed reaction is (2R,3S)-3-isopropylmalate = (2S)-2-isopropylmalate. The protein operates within amino-acid biosynthesis; L-leucine biosynthesis; L-leucine from 3-methyl-2-oxobutanoate: step 2/4. In terms of biological role, catalyzes the isomerization between 2-isopropylmalate and 3-isopropylmalate, via the formation of 2-isopropylmaleate. The protein is 3-isopropylmalate dehydratase small subunit of Xanthomonas axonopodis pv. citri (strain 306).